An 887-amino-acid polypeptide reads, in one-letter code: Exocyst complex component SEC3A (887 aa).

Coiled coils occupy residues 221–248 (IGEA…AILE) and 281–301 (LRHM…LEMQ). A disordered region spans residues 542–581 (GAGNDKKSQSNNDDGNDDDDLGIMDIDETDKKPGKNSPDL). Positions 555-569 (DGNDDDDLGIMDIDE) are enriched in acidic residues.

It belongs to the SEC3 family. As to quaternary structure, the exocyst complex is composed of SEC3, SEC5, SEC6, SEC8, SEC10, EXO70A1 and EXO84B. Interacts with EXO70A1, SEC5A and ICR1, but not with ICR2. Binds to EXO70H1. Binds directly to B1L. In terms of tissue distribution, widely expressed. Preferentially expressed in tissues containing dividing and expanding cells, such as the shoot apical meristem, root tip, lateral root primordia and developing embryos.

The protein localises to the cytoplasm. The protein resides in the cytosol. It is found in the cell membrane. It localises to the cytoskeleton. Its subcellular location is the phragmoplast. The protein localises to the secreted. The protein resides in the extracellular exosome. Its function is as follows. Component of the exocyst complex involved in the docking of exocytic vesicles with fusion sites on the plasma membrane during regulated or polarized secretion. Involved in polarized cell growth and organ morphogenesis. During cytokinesis, involved in cell plate initiation, cell plate maturation and formation of new primary cell wall. During cytokinesis, involved in cell plate initiation, cell plate maturation and formation of new primary cell wall. The chain is Exocyst complex component SEC3A from Arabidopsis thaliana (Mouse-ear cress).